Reading from the N-terminus, the 187-residue chain is Phosphatidylethanolamine-binding protein 1 (187 aa).

Phosphoserine occurs at positions 6 and 13. Phosphothreonine is present on Thr-42. Ser-52, Ser-54, Ser-98, and Ser-153 each carry phosphoserine. Residues 93–134 (KGNDISSGTVLSDYVGSGPPKGTGLHRYVWLVYEQDRPLKCD) are interaction with RAF1.

The protein belongs to the phosphatidylethanolamine-binding protein family. As to quaternary structure, has a tendency to form dimers by disulfide cross-linking. Interacts with RAF1 and this interaction is enhanced if RAF1 is phosphorylated on residues 'Ser-338', 'Ser-339', 'Tyr-340' and 'Tyr-341'. Interacts with ALOX15; in response to IL13/interleukin-13, prevents the interaction of PEBP1 with RAF1 to activate the ERK signaling cascade.

Its subcellular location is the cytoplasm. Binds ATP, opioids and phosphatidylethanolamine. Has lower affinity for phosphatidylinositol and phosphatidylcholine. Serine protease inhibitor which inhibits thrombin, neuropsin and chymotrypsin but not trypsin, tissue type plasminogen activator and elastase. Inhibits the kinase activity of RAF1 by inhibiting its activation and by dissociating the RAF1/MEK complex and acting as a competitive inhibitor of MEK phosphorylation. Its function is as follows. HCNP may be involved in the function of the presynaptic cholinergic neurons of the central nervous system. HCNP increases the production of choline acetyltransferase but not acetylcholinesterase. Seems to be mediated by a specific receptor. The sequence is that of Phosphatidylethanolamine-binding protein 1 (PEBP1) from Pongo abelii (Sumatran orangutan).